We begin with the raw amino-acid sequence, 220 residues long: Fructose-6-phosphate aldolase (220 aa).

The active-site Schiff-base intermediate with substrate is lysine 85.

It belongs to the transaldolase family. Type 3A subfamily. Homodecamer.

It localises to the cytoplasm. The enzyme catalyses beta-D-fructose 6-phosphate = dihydroxyacetone + D-glyceraldehyde 3-phosphate. Functionally, catalyzes the reversible formation of fructose 6-phosphate from dihydroxyacetone and D-glyceraldehyde 3-phosphate via an aldolization reaction. The protein is Fructose-6-phosphate aldolase of Salmonella arizonae (strain ATCC BAA-731 / CDC346-86 / RSK2980).